Here is a 130-residue protein sequence, read N- to C-terminus: Small ribosomal subunit protein uS11c (130 aa).

This sequence belongs to the universal ribosomal protein uS11 family. In terms of assembly, part of the 30S ribosomal subunit.

The protein localises to the plastid. It localises to the chloroplast. This is Small ribosomal subunit protein uS11c from Guillardia theta (Cryptophyte).